Reading from the N-terminus, the 149-residue chain is 3-hydroxyacyl-[acyl-carrier-protein] dehydratase FabZ (149 aa).

Residue histidine 50 is part of the active site.

This sequence belongs to the thioester dehydratase family. FabZ subfamily.

Its subcellular location is the cytoplasm. It carries out the reaction a (3R)-hydroxyacyl-[ACP] = a (2E)-enoyl-[ACP] + H2O. Involved in unsaturated fatty acids biosynthesis. Catalyzes the dehydration of short chain beta-hydroxyacyl-ACPs and long chain saturated and unsaturated beta-hydroxyacyl-ACPs. This chain is 3-hydroxyacyl-[acyl-carrier-protein] dehydratase FabZ, found in Pediococcus pentosaceus (strain ATCC 25745 / CCUG 21536 / LMG 10740 / 183-1w).